A 458-amino-acid chain; its full sequence is Transcription factor verZ (458 aa).

The segment at residues 117–144 (CDRCQAAKVKCGHEKPSCRRCTYHKVEC) is a DNA-binding region (zn(2)-C6 fungal-type). 2 disordered regions span residues 153 to 256 (GRPR…MQSM) and 435 to 458 (MEEEDDPCSEIKLNPNRLRLEDGK). Polar residues-rich tracts occupy residues 167-186 (PSPQGSINGASDENSRSKSA), 193-207 (FTGTEPITEARQSPV), and 223-235 (RAEPWTPSLTTNF).

It is found in the nucleus. Its function is as follows. Transcription factor; part of the gene cluster that mediates the biosynthesis of 11'-deoxyverticillin A, one of the dimeric epipolythiodioxopiperazines (ETPs) from the verticillin family that act as mycotoxins. 11'-deoxyverticillin A is required for normal conidiation. Directly binds the consensus motif 5'-(T/C)(C/A)(G/T)GN3CC(G/T)(A/G)(G/C)-3' localized in the upstream regions of the verticillin biosynthetic genes. This Clonostachys rogersoniana protein is Transcription factor verZ.